The chain runs to 421 residues: Galactooligosaccharide-binding protein (421 aa).

Residues 1 to 22 (MKMAKKCSVFMLCAAVSLSLAA) form the signal peptide. The N-palmitoyl cysteine moiety is linked to residue Cys23. The S-diacylglycerol cysteine moiety is linked to residue Cys23. A disordered region spans residues 393 to 421 (ATGKADPKQALDQAAETAKGQIKAKHSGK).

It belongs to the bacterial solute-binding protein 1 family. The complex is composed of two ATP-binding proteins (MsmX), two transmembrane proteins (GanP and GanQ) and a solute-binding protein (GanS).

Its subcellular location is the cell membrane. Its function is as follows. Involved in galactan degradation. Part of the ABC transporter complex GanPQS involved in the uptake of galactooligosaccharides. Binds mainly galactotetraose and galactotriose. This is Galactooligosaccharide-binding protein from Bacillus subtilis (strain 168).